A 135-amino-acid chain; its full sequence is ATP synthase epsilon chain (135 aa).

Belongs to the ATPase epsilon chain family. In terms of assembly, F-type ATPases have 2 components, CF(1) - the catalytic core - and CF(0) - the membrane proton channel. CF(1) has five subunits: alpha(3), beta(3), gamma(1), delta(1), epsilon(1). CF(0) has three main subunits: a, b and c.

Its subcellular location is the cellular thylakoid membrane. Its function is as follows. Produces ATP from ADP in the presence of a proton gradient across the membrane. The protein is ATP synthase epsilon chain of Prochlorococcus marinus (strain NATL1A).